A 672-amino-acid chain; its full sequence is Putative per-hexamer repeat protein 5 (672 aa).

Gly residues-rich tracts occupy residues 141–161 (TGTGTGTGTGTGTGTGTGTGT), 171–191 (TDRGTGTGTGTGTGTGTGTGT), 215–233 (TGTGTGTGTGTGTGTGTDT), 243–263 (TGTGTGTGTGTGTGTGTGTGT), 273–295 (TDRGTGTGTGTGTGTGTGTGTGT), 303–355 (TGTG…GSGS), and 365–389 (TGTGTGTDTGTGTGTGTGTGTGSGS). 2 disordered regions span residues 141-193 (TGTG…GTGT) and 213-672 (TGTG…TGTA). A compositionally biased stretch (low complexity) spans 390 to 424 (GTAKVTGTATTTATVTETGTAKVTGTDTGTAKVTG). Positions 425-469 (TGTGTGTGTGTGTGTGTGTGTGTGTGTGTGTGTGTGTGTGTGSGS) are enriched in gly residues. A compositionally biased stretch (low complexity) spans 470 to 486 (GTAKVTGTDTGTAKVTG). Gly residues predominate over residues 487 to 537 (TGTGTGTGTGTGTGTGTGTGTGTGSGSGSGSGSGSGSGTGTGTGLGSGSGS). Residues 538-552 (GTAKVTGTGTAKVTG) are compositionally biased toward low complexity. The span at 553–617 (TGTGTGTGTG…GTGTGTGTGT (65 aa)) shows a compositional bias: gly residues. Positions 618-636 (GTSTVTVRGTGTGTATATG) are enriched in low complexity. 2 stretches are compositionally biased toward gly residues: residues 637 to 653 (TGTGTGTGTGTGTGTGT) and 663 to 672 (RGTGTGTGTA).

The polypeptide is Putative per-hexamer repeat protein 5 (Phxr5) (Mus musculus (Mouse)).